We begin with the raw amino-acid sequence, 417 residues long: Serine hydroxymethyltransferase 2 (417 aa).

(6S)-5,6,7,8-tetrahydrofolate-binding positions include Leu-121 and 125–127 (GHL). N6-(pyridoxal phosphate)lysine is present on Lys-229. 354-356 (SPF) lines the (6S)-5,6,7,8-tetrahydrofolate pocket.

Belongs to the SHMT family. Homodimer. Pyridoxal 5'-phosphate is required as a cofactor.

The protein localises to the cytoplasm. The catalysed reaction is (6R)-5,10-methylene-5,6,7,8-tetrahydrofolate + glycine + H2O = (6S)-5,6,7,8-tetrahydrofolate + L-serine. The protein operates within one-carbon metabolism; tetrahydrofolate interconversion. It participates in amino-acid biosynthesis; glycine biosynthesis; glycine from L-serine: step 1/1. Catalyzes the reversible interconversion of serine and glycine with tetrahydrofolate (THF) serving as the one-carbon carrier. This reaction serves as the major source of one-carbon groups required for the biosynthesis of purines, thymidylate, methionine, and other important biomolecules. Also exhibits THF-independent aldolase activity toward beta-hydroxyamino acids, producing glycine and aldehydes, via a retro-aldol mechanism. The sequence is that of Serine hydroxymethyltransferase 2 from Pseudomonas fluorescens (strain Pf0-1).